Reading from the N-terminus, the 263-residue chain is MPEGPEIRRAADNLEAAIKGKPLTDVWFAFPQLKSYQSQLIGQHVTHVETRGKALLTHFSNELTLYSHNQLYGVWRVVDTGEEPQTTRVLRVKLQTADKTILLYSASDIEMLTPEQLTTHPFLQRVGPDVLDPNLTPEVVKERLLSPRFRNRQFAGLLLDQAFLAGLGNYLRVEILWQVGLTGNHKAKDLNAAQLDALAHALLDIPRLSYATRGQVDENKHHGALFRFKVFHRDGELCERCGGIIEKTTLSSRPFYWCPGCQH.

Catalysis depends on Pro2, which acts as the Schiff-base intermediate with DNA. Glu3 functions as the Proton donor in the catalytic mechanism. The active-site Proton donor; for beta-elimination activity is Lys53. DNA-binding residues include Gln70, Arg125, and Asn169. The segment at 229 to 263 (KVFHRDGELCERCGGIIEKTTLSSRPFYWCPGCQH) adopts an FPG-type zinc-finger fold. The active-site Proton donor; for delta-elimination activity is Arg253.

It belongs to the FPG family. Zn(2+) is required as a cofactor.

It catalyses the reaction 2'-deoxyribonucleotide-(2'-deoxyribose 5'-phosphate)-2'-deoxyribonucleotide-DNA = a 3'-end 2'-deoxyribonucleotide-(2,3-dehydro-2,3-deoxyribose 5'-phosphate)-DNA + a 5'-end 5'-phospho-2'-deoxyribonucleoside-DNA + H(+). In terms of biological role, involved in base excision repair of DNA damaged by oxidation or by mutagenic agents. Acts as a DNA glycosylase that recognizes and removes damaged bases. Has a preference for oxidized pyrimidines, such as thymine glycol, 5,6-dihydrouracil and 5,6-dihydrothymine. Has AP (apurinic/apyrimidinic) lyase activity and introduces nicks in the DNA strand. Cleaves the DNA backbone by beta-delta elimination to generate a single-strand break at the site of the removed base with both 3'- and 5'-phosphates. The polypeptide is Endonuclease 8 (Escherichia coli O7:K1 (strain IAI39 / ExPEC)).